A 64-amino-acid chain; its full sequence is Mitotic-spindle organizing protein 1 (64 aa).

This sequence belongs to the MOZART1 family. Part of the gamma-tubulin complex. Interacts directly with alp6/GPC3.

It is found in the cytoplasm. Its subcellular location is the cytoskeleton. The protein localises to the microtubule organizing center. The protein resides in the spindle pole body. Functionally, required for gamma-tubulin complex recruitment to the microtubule organizing center (MTOC). In Schizosaccharomyces pombe (strain 972 / ATCC 24843) (Fission yeast), this protein is Mitotic-spindle organizing protein 1 (mzt1).